The following is a 243-amino-acid chain: Venom nerve growth factor (243 aa).

The signal sequence occupies residues 1–18 (MSMLCYTLIIAFLIGIWA). Residues 19–125 (APKSEDNVPL…TLNRNIRTKR (107 aa)) constitute a propeptide that is removed on maturation. Residues 45 to 66 (HEGLKTSRNTDQRHLAPKKAED) form a disordered region. The span at 46-66 (EGLKTSRNTDQRHLAPKKAED) shows a compositional bias: basic and acidic residues. 3 disulfides stabilise this stretch: Cys139–Cys204, Cys182–Cys232, and Cys192–Cys234. Asn148 carries N-linked (GlcNAc...) asparagine glycosylation.

The protein belongs to the NGF-beta family. Homodimer; non-covalently linked. As to expression, expressed by the venom gland.

The protein localises to the secreted. Functionally, nerve growth factor is important for the development and maintenance of the sympathetic and sensory nervous systems. It stimulates division and differentiation of sympathetic and embryonic sensory neurons as well as basal forebrain cholinergic neurons in the brain. Its relevance in the snake venom is not clear. However, it has been shown to inhibit metalloproteinase-dependent proteolysis of platelet glycoprotein Ib alpha, suggesting a metalloproteinase inhibition to prevent metalloprotease autodigestion and/or protection against prey proteases. Binds a lipid between the two protein chains in the homodimer. The lipid-bound form promotes histamine relase from mouse mast cells, contrary to the lipid-free form. This is Venom nerve growth factor from Cryptophis nigrescens (Eastern small-eyed snake).